The chain runs to 556 residues: Double-strand-break repair protein rad21-like protein 1 (556 aa).

The protein belongs to the rad21 family. Component of some meiotic cohesin complex composed of the SMC1 (SMC1A or SMC1B) and SMC3 heterodimer attached via their hinge domain, RAD21L which link them, and STAG3.

The protein localises to the nucleus. It is found in the chromosome. In terms of biological role, meiosis-specific component of some cohesin complex required during the initial steps of prophase I in male meiosis. Probably required during early meiosis in males for separation of sister chromatids and homologous chromosomes. Replaces RAD21 in premeiotic S phase (during early stages of prophase I), while RAD21 reappears in later stages of prophase I. Involved in synaptonemal complex assembly, synapsis initiation and crossover recombination between homologous chromosomes during prophase I. The chain is Double-strand-break repair protein rad21-like protein 1 (RAD21L1) from Homo sapiens (Human).